The following is a 409-amino-acid chain: Serine/threonine transporter SstT (409 aa).

9 helical membrane passes run 17 to 37, 49 to 69, 83 to 103, 142 to 162, 180 to 200, 218 to 238, 301 to 321, 331 to 351, and 357 to 377; these read LVGQ…FFPA, FVSA…MASI, ILLL…IASF, ALIS…GIAF, VSLI…GLVA, LVVL…LIVF, GAAI…GIAV, VVAS…LLLI, and LFGI…IIAI.

This sequence belongs to the dicarboxylate/amino acid:cation symporter (DAACS) (TC 2.A.23) family.

The protein localises to the cell inner membrane. The enzyme catalyses L-serine(in) + Na(+)(in) = L-serine(out) + Na(+)(out). It carries out the reaction L-threonine(in) + Na(+)(in) = L-threonine(out) + Na(+)(out). Functionally, involved in the import of serine and threonine into the cell, with the concomitant import of sodium (symport system). The protein is Serine/threonine transporter SstT of Pseudomonas aeruginosa (strain LESB58).